The sequence spans 448 residues: Velvet complex subunit 2 (448 aa).

Disordered regions lie at residues 1 to 153 (MNSA…SKIE) and 224 to 306 (EPGT…NGYG). The segment covering 15–34 (PGPAYSSSAPPPIHTYQQHQ) has biased composition (low complexity). Pro residues-rich tracts occupy residues 35 to 44 (HPPPPLPPPS) and 52 to 61 (PPLPPPPSAP). Over residues 96–107 (APYQQSQPSQYP) the composition is skewed to low complexity. Pro residues predominate over residues 116–132 (VPPPSQHDEPPPPPSSG). A Velvet domain is found at 155–431 (GSGWKYSLDV…ANQGIKIPIR (277 aa)). Low complexity predominate over residues 260–292 (QQSYGPAPSYPPSSSYGPPQQYYPRHSGYSAEP).

This sequence belongs to the velvet family. VelB subfamily. As to quaternary structure, component of the heterotrimeric velvet complex composed of LAE1, VE1 and VELB; VE1 acting as a bridging protein between LAE1 and VEL2. Interacts with VE1. Forms a heterodimeric complex with VOS1; the formation of the VELB-VOS1 complex is light-dependent.

Its subcellular location is the nucleus. The protein localises to the cytoplasm. In terms of biological role, component of the velvet transcription factor complex that controls sexual/asexual developmental ratio in response to light, promoting sexual development in the darkness while stimulating asexual sporulation under illumination. The velvet complex acts as a global regulator for secondary metabolite gene expression. Component of the VELB-VOS1 heterodimeric complex that plays a dual role in activating genes associated with spore maturation and repressing certain development-associated genes. The VELB-VOS1 complex binds DNA through the DNA-binding domain of VOS1 that recognizes an 11-nucleotide consensus sequence 5'-CTGGCCGCGGC-3' consisting of two motifs in the promoters of key developmental regulatory genes. Controls the expression of the fumonisins gene cluster. Involved in cell wall integrity, cell surface hydrophobicity, hyphal polarity and conidiation pattern. Involved in oxidative stress resistance by positively regulating the transcription of the catalase-encoding gene CAT2. In Gibberella moniliformis (strain M3125 / FGSC 7600) (Maize ear and stalk rot fungus), this protein is Velvet complex subunit 2.